The chain runs to 177 residues: N-acetylmuramoyl-L-alanine amidase A (177 aa).

An N-acetylmuramoyl-L-alanine amidase domain is found at 23 to 158 (QTSAVIMHTM…SGNENRYDPG (136 aa)). Cys-114 and Cys-121 form a disulfide bridge.

Its subcellular location is the secreted. It catalyses the reaction Hydrolyzes the link between N-acetylmuramoyl residues and L-amino acid residues in certain cell-wall glycopeptides.. Functionally, antibacterial activity against Gram-positive bacteria M.luteus, S.aureus, E.faecalis and P.acidilactici and Gram-negative bacterium E.coli. This chain is N-acetylmuramoyl-L-alanine amidase A (cwhA), found in Achromobacter lyticus.